A 971-amino-acid polypeptide reads, in one-letter code: E3 ubiquitin-protein ligase MIB2 (971 aa).

The MIB/HERC2 1 domain maps to 1 to 80 (MDLDPHAGVQ…AHDLLLYDNA (80 aa)). A ZZ-type zinc finger spans residues 86-138 (HPNIICDCCKKHGLRGMRWKCRVCFDYDLCTQCYMHNKHDLTHAFERYETSHS). Cys91, Cys94, Cys106, Cys109, Cys115, Cys118, His124, and His128 together coordinate Zn(2+). The MIB/HERC2 2 domain maps to 149 to 227 (LPRIPLRGIF…KVDLKCVGEA (79 aa)). Ser251 carries the phosphoserine modification. ANK repeat units lie at residues 478–507 (QGRT…SVDL), 511–540 (EGNT…GVDA), 544–573 (TRST…DVNL), 577–609 (HADT…DVTA), 613–642 (QGFT…QLVD), 647–677 (DGFT…DVNV), 681–710 (KLQS…NVNT), 714–742 (EGDT…DPGP), and 783–812 (RGRS…ERQA). RING-type zinc fingers lie at residues 848–883 (CLVC…IRCQ) and 927–960 (CPIC…PICR).

In terms of assembly, interacts with actin monomer. In terms of processing, ubiquitinated. Possibly via autoubiquitination.

The protein resides in the cytoplasm. Its subcellular location is the endosome. The enzyme catalyses S-ubiquitinyl-[E2 ubiquitin-conjugating enzyme]-L-cysteine + [acceptor protein]-L-lysine = [E2 ubiquitin-conjugating enzyme]-L-cysteine + N(6)-ubiquitinyl-[acceptor protein]-L-lysine.. The protein operates within protein modification; protein ubiquitination. In terms of biological role, E3 ubiquitin-protein ligase that mediates ubiquitination of Delta receptors, which act as ligands of Notch proteins. Positively regulates the Delta-mediated Notch signaling by ubiquitinating the intracellular domain of Delta, leading to endocytosis of Delta receptors. This is E3 ubiquitin-protein ligase MIB2 (Mib2) from Rattus norvegicus (Rat).